We begin with the raw amino-acid sequence, 574 residues long: Zinc finger and BTB domain-containing protein 3 (574 aa).

Positions 74–142 constitute a BTB domain; the sequence is CDCTVMVGST…MYAGQLTLRG (69 aa). Disordered stretches follow at residues 175-277 and 305-346; these read AEAD…SSTE and SLRV…APAP. Glycyl lysine isopeptide (Lys-Gly) (interchain with G-Cter in SUMO2) cross-links involve residues Lys-181 and Lys-182. The segment covering 187 to 212 has biased composition (polar residues); that stretch reads NSQLPSLEFLSSTSRGTQPSLASAET. The span at 323-334 shows a compositional bias: low complexity; the sequence is PPASAPTSAPAP. Residue Ser-362 is modified to Phosphoserine. The disordered stretch occupies residues 364–403; it reads EETDVSDEQPQGPERAFPSGGAVYGAQPSQPEAFEDPGAA. C2H2-type zinc fingers lie at residues 472–494 and 500–523; these read PTCKTCGKTFSCSYTLRRHATVH and YECRYCLRSYTQSGDLYRHIRKAH. Basic and acidic residues predominate over residues 526-535; that stretch reads DLAKRSKPDP. Residues 526–574 form a disordered region; it reads DLAKRSKPDPEVGPLLGVQPLPGSPTADRQSSSGGGPPKDFVLAPKTNI. A Glycyl lysine isopeptide (Lys-Gly) (interchain with G-Cter in SUMO2) cross-link involves residue Lys-532. Ser-549 bears the Phosphoserine mark.

The protein localises to the nucleus. Functionally, may be involved in transcriptional regulation. This Homo sapiens (Human) protein is Zinc finger and BTB domain-containing protein 3 (ZBTB3).